We begin with the raw amino-acid sequence, 375 residues long: Histidine biosynthesis bifunctional protein HisB (375 aa).

The histidinol-phosphatase stretch occupies residues 1 to 168; the sequence is MTPIVFIDRD…GIAHTLADAP (168 aa). The active-site Nucleophile is the aspartate 8. Mg(2+) is bound by residues aspartate 8, aspartate 10, and aspartate 128. Aspartate 10 functions as the Proton donor in the catalytic mechanism. The imidazoleglycerol-phosphate dehydratase stretch occupies residues 169 to 375; sequence RRAVVQRHTK…HVLPSTKGAL (207 aa).

The protein in the N-terminal section; belongs to the histidinol-phosphatase family. This sequence in the C-terminal section; belongs to the imidazoleglycerol-phosphate dehydratase family. The cofactor is Mg(2+).

It is found in the cytoplasm. The enzyme catalyses D-erythro-1-(imidazol-4-yl)glycerol 3-phosphate = 3-(imidazol-4-yl)-2-oxopropyl phosphate + H2O. It carries out the reaction L-histidinol phosphate + H2O = L-histidinol + phosphate. It participates in amino-acid biosynthesis; L-histidine biosynthesis; L-histidine from 5-phospho-alpha-D-ribose 1-diphosphate: step 6/9. It functions in the pathway amino-acid biosynthesis; L-histidine biosynthesis; L-histidine from 5-phospho-alpha-D-ribose 1-diphosphate: step 8/9. In Xylella fastidiosa (strain Temecula1 / ATCC 700964), this protein is Histidine biosynthesis bifunctional protein HisB.